Here is a 259-residue protein sequence, read N- to C-terminus: Phosphate import ATP-binding protein PstB 2 (259 aa).

Residues 12-254 (ISARGLNVHY…PKEPLTQGYI (243 aa)) form the ABC transporter domain. 44 to 51 (GPSGCGKS) serves as a coordination point for ATP.

The protein belongs to the ABC transporter superfamily. Phosphate importer (TC 3.A.1.7) family. In terms of assembly, the complex is composed of two ATP-binding proteins (PstB), two transmembrane proteins (PstC and PstA) and a solute-binding protein (PstS).

Its subcellular location is the cell inner membrane. It carries out the reaction phosphate(out) + ATP + H2O = ADP + 2 phosphate(in) + H(+). Part of the ABC transporter complex PstSACB involved in phosphate import. Responsible for energy coupling to the transport system. The sequence is that of Phosphate import ATP-binding protein PstB 2 from Paramagnetospirillum magneticum (strain ATCC 700264 / AMB-1) (Magnetospirillum magneticum).